The following is a 37-amino-acid chain: M-oxotoxin-Ot2d (37 aa).

Expressed by the venom gland.

It localises to the secreted. In terms of biological role, disrupts biological membranes, particularly those rich in phosphocholine. Has antimicrobial activity against Gram-negative bacterium E.coli, Gram-positive bacteria B.subtilis and S.aureus, and hemolytic activity against sheep, pig and guinea pig red blood cells. Has insecticidal activity against S.frugiperda ovarian cells by opening non-selective ion channels. Enhances the insecticidal activity of spider venom neurotoxic peptides. The sequence is that of M-oxotoxin-Ot2d from Oxyopes takobius (Lynx spider).